We begin with the raw amino-acid sequence, 421 residues long: MRIAMISMHTSPLEQPGSGDAGGMNVYVLNTARQLARLGVEVDIFTRATRPSQGEVVDVEERLRVINIVAGPYEGLSKEELPTQLAAFTGGIFNFARCFEVDYDVIHSHYWLSGQVGWLLRDLWDIPLVHTAHTLAAVKNVHRTLDDTPETEARRICEQQLVDNADILVVNTAQETRDLIEHYDASPDNIVVVSPGADTDLYTPGTDRMTERARRQLGIPLHTKVVAFVGRLQKFKGPDVLIRATAELMERDPDRRLRVVICGGASGANSSPDTYHNLARELGVERVVRFLSPRPPQELVAIYQAADIVAVPSYNESFGLVAMEAQASGTPVVAAAVGGLPIAVADGDTGLLVHSHSAQDWADALEQLLDDDPRRISMGEAAVDHAQQFSWAAAATQLENIYADAMSIEIPDCHARRAIGY.

His9 serves as a coordination point for 1D-myo-inositol 3-phosphate. UDP-N-acetyl-alpha-D-glucosamine-binding positions include 15–16 (QP) and Gly23. 1D-myo-inositol 3-phosphate contacts are provided by residues 20 to 25 (DAGGMN), Lys78, Tyr110, Thr134, and Arg154. The UDP-N-acetyl-alpha-D-glucosamine site is built by Arg231, Lys236, and Arg294. 3 residues coordinate Mg(2+): Tyr303, Gln304, and Ala306. Positions 316 and 324 each coordinate UDP-N-acetyl-alpha-D-glucosamine. Residue Thr330 participates in Mg(2+) binding.

It belongs to the glycosyltransferase group 1 family. MshA subfamily. As to quaternary structure, homodimer.

The enzyme catalyses 1D-myo-inositol 3-phosphate + UDP-N-acetyl-alpha-D-glucosamine = 1D-myo-inositol 2-acetamido-2-deoxy-alpha-D-glucopyranoside 3-phosphate + UDP + H(+). In terms of biological role, catalyzes the transfer of a N-acetyl-glucosamine moiety to 1D-myo-inositol 3-phosphate to produce 1D-myo-inositol 2-acetamido-2-deoxy-glucopyranoside 3-phosphate in the mycothiol biosynthesis pathway. In Corynebacterium aurimucosum (strain ATCC 700975 / DSM 44827 / CIP 107346 / CN-1) (Corynebacterium nigricans), this protein is D-inositol 3-phosphate glycosyltransferase.